A 203-amino-acid polypeptide reads, in one-letter code: MRVYSCHFCSSPVYPLHGIMFVRNDAKEFRFCRSKCHHAFKQRRNPRKLRWTKAFRKAAGKELVVDSTLTFAARRNVPVRYNRDLVATTLKTMARVEEIRQKRERAFYKNRMRGNKDKKLALDRRLVEQNPQLLKIRDVELRRKAERKAAKENAMDEEIEDEEEEIASEDMMSEDEEMESESEAESTKQKVVLKNKKKSKRSN.

The interval 147-203 (RKAAKENAMDEEIEDEEEEIASEDMMSEDEEMESESEAESTKQKVVLKNKKKSKRSN) is disordered. Over residues 155-184 (MDEEIEDEEEEIASEDMMSEDEEMESESEA) the composition is skewed to acidic residues. The span at 191–203 (VVLKNKKKSKRSN) shows a compositional bias: basic residues.

This sequence belongs to the eukaryotic ribosomal protein eL24 family. In terms of assembly, associated with nucleolar and cytoplasmic pre-60S particles. At the end of biogenesis it dissociates from cytoplasmic pre-60S particles and is likely to be exchanged for its ribosomal homolog, RPL24.

The protein localises to the cytoplasm. Its subcellular location is the nucleus. Functionally, involved in the biogenesis of the 60S ribosomal subunit. Ensures the docking of DEHA2D15950g/NOG1 to pre-60S particles. Activates and recruits ATPase AFG2 to cytoplasmic pre-60S ribosomal particles. This Debaryomyces hansenii (strain ATCC 36239 / CBS 767 / BCRC 21394 / JCM 1990 / NBRC 0083 / IGC 2968) (Yeast) protein is Ribosome biogenesis protein RLP24 (RLP24).